The sequence spans 312 residues: MPIKIPDQLPAREVLVREGVSVMDEKTALRQDIRPLQIGLLNLMPNKIRTETQFARLIGASPLQVELTLVRIGNHKAKNTPEDHLITFYETWEEVAPRKFDGFIVTGAPIELLPYEDVTYWNEMTRILDWTTSHVHSSFFICWGAMAAAWHFHGIPKHTLDKKAFGVFRHRNNAPASPYLAGFSDDLALPVSRWTEVRTADIPANSGLEMLMDSDETGPCLLAEAAGNRLYMFNHIEYDSTSLKEEYDRDVAAGVPIEVPHEYYPGNDPTRPPLNRWRSHAHLLFGNWINQVYQTTPYDLDKIGRNLEHALS.

Cysteine 142 (acyl-thioester intermediate) is an active-site residue. 2 residues coordinate substrate: lysine 163 and serine 192. The active-site Proton acceptor is the histidine 235. The active site involves glutamate 237. Arginine 249 is a substrate binding site.

Belongs to the MetA family.

It is found in the cytoplasm. The catalysed reaction is L-homoserine + acetyl-CoA = O-acetyl-L-homoserine + CoA. It participates in amino-acid biosynthesis; L-methionine biosynthesis via de novo pathway; O-acetyl-L-homoserine from L-homoserine: step 1/1. Functionally, transfers an acetyl group from acetyl-CoA to L-homoserine, forming acetyl-L-homoserine. The sequence is that of Homoserine O-acetyltransferase from Chelativorans sp. (strain BNC1).